We begin with the raw amino-acid sequence, 854 residues long: DNA mismatch repair protein MutS (854 aa).

608-615 (GPNMAGKS) provides a ligand contact to ATP.

Belongs to the DNA mismatch repair MutS family.

Functionally, this protein is involved in the repair of mismatches in DNA. It is possible that it carries out the mismatch recognition step. This protein has a weak ATPase activity. The sequence is that of DNA mismatch repair protein MutS from Leuconostoc mesenteroides subsp. mesenteroides (strain ATCC 8293 / DSM 20343 / BCRC 11652 / CCM 1803 / JCM 6124 / NCDO 523 / NBRC 100496 / NCIMB 8023 / NCTC 12954 / NRRL B-1118 / 37Y).